The primary structure comprises 165 residues: MKNIILGGGCFWCIEAVFERLKGVINTEVGYSGGKPNPSYESVCNGDGNIEVVKINYDEKQISLLEILILFFKIHDPTSIDKQGEDIGIQYRSIIFYENEEDKILAQNFIEEQQKIFSKKIVTKISRLQTYYKAENYHQHYFINNPDQGYCQAVIAPKLQKIQSD.

Residue C10 is part of the active site.

The protein belongs to the MsrA Met sulfoxide reductase family.

It catalyses the reaction L-methionyl-[protein] + [thioredoxin]-disulfide + H2O = L-methionyl-(S)-S-oxide-[protein] + [thioredoxin]-dithiol. The enzyme catalyses [thioredoxin]-disulfide + L-methionine + H2O = L-methionine (S)-S-oxide + [thioredoxin]-dithiol. Has an important function as a repair enzyme for proteins that have been inactivated by oxidation. Catalyzes the reversible oxidation-reduction of methionine sulfoxide in proteins to methionine. This Campylobacter jejuni (strain RM1221) protein is Peptide methionine sulfoxide reductase MsrA.